The following is a 305-amino-acid chain: Serine/threonine-protein phosphatase PP1-delta (305 aa).

Mn(2+) contacts are provided by Asp-62, His-64, Asp-90, and Asn-122. Residue His-123 is the Proton donor of the active site. 2 residues coordinate Mn(2+): His-172 and His-247.

It belongs to the PPP phosphatase family. In terms of tissue distribution, expressed in male germline including spermatocytes, spermatids and spermatozoa.

It is found in the chromosome. The protein resides in the cell projection. The protein localises to the pseudopodium. It localises to the cytoplasm. The enzyme catalyses O-phospho-L-seryl-[protein] + H2O = L-seryl-[protein] + phosphate. The catalysed reaction is O-phospho-L-threonyl-[protein] + H2O = L-threonyl-[protein] + phosphate. Its function is as follows. Probable phosphatase which plays a redundant role with gsp-4 in spermatogenesis by regulating sister chromatid segregation during meiosis. In addition, involved in sperm motility by controlling the dynamic disassembly of major sperm proteins (MSP) in the spermatozoan pseudopodium. The protein is Serine/threonine-protein phosphatase PP1-delta of Caenorhabditis elegans.